The following is a 239-amino-acid chain: Octanoyl-[acyl-carrier-protein]:protein N-octanoyltransferase LIPT2, mitochondrial (239 aa).

The N-terminal 18 residues, 1–18 (MSVPVLRVRRLGLVGYAE), are a transit peptide targeting the mitochondrion. In terms of domain architecture, BPL/LPL catalytic spans 37 to 217 (GSPGGALLLC…AFEEEFQCQL (181 aa)). Substrate is bound by residues 81–88 (RGGLITFH), 147–149 (AIG), and 160–162 (GLA). The Acyl-thioester intermediate role is filled by Cys178. Positions 220 to 239 (EQNPEQNPVQNRPDRDAGPL) are disordered.

This sequence belongs to the LipB family.

It localises to the mitochondrion. The enzyme catalyses octanoyl-[ACP] + L-lysyl-[protein] = N(6)-octanoyl-L-lysyl-[protein] + holo-[ACP] + H(+). The protein operates within protein modification; protein lipoylation via endogenous pathway; protein N(6)-(lipoyl)lysine from octanoyl-[acyl-carrier-protein]: step 1/2. In terms of biological role, catalyzes the transfer of endogenously produced octanoic acid from octanoyl-acyl-carrier-protein (octanoyl-ACP) onto the lipoyl domains of lipoate-dependent enzymes such as the protein H of the glycine cleavage system (GCSH). Lipoyl-ACP can also act as a substrate although octanoyl-ACP is likely to be the physiological substrate. In Xenopus tropicalis (Western clawed frog), this protein is Octanoyl-[acyl-carrier-protein]:protein N-octanoyltransferase LIPT2, mitochondrial (lipt2).